Reading from the N-terminus, the 201-residue chain is FMN-dependent NADH:quinone oxidoreductase (201 aa).

FMN is bound by residues Ser9 and 93-96; that span reads MYNF.

This sequence belongs to the azoreductase type 1 family. In terms of assembly, homodimer. FMN serves as cofactor.

It carries out the reaction 2 a quinone + NADH + H(+) = 2 a 1,4-benzosemiquinone + NAD(+). The enzyme catalyses N,N-dimethyl-1,4-phenylenediamine + anthranilate + 2 NAD(+) = 2-(4-dimethylaminophenyl)diazenylbenzoate + 2 NADH + 2 H(+). Functionally, quinone reductase that provides resistance to thiol-specific stress caused by electrophilic quinones. Its function is as follows. Also exhibits azoreductase activity. Catalyzes the reductive cleavage of the azo bond in aromatic azo compounds to the corresponding amines. In Bradyrhizobium sp. (strain BTAi1 / ATCC BAA-1182), this protein is FMN-dependent NADH:quinone oxidoreductase.